A 184-amino-acid polypeptide reads, in one-letter code: Ribosome-recycling factor (184 aa).

It belongs to the RRF family.

Its subcellular location is the cytoplasm. Functionally, responsible for the release of ribosomes from messenger RNA at the termination of protein biosynthesis. May increase the efficiency of translation by recycling ribosomes from one round of translation to another. The chain is Ribosome-recycling factor from Leptospira interrogans serogroup Icterohaemorrhagiae serovar copenhageni (strain Fiocruz L1-130).